A 463-amino-acid chain; its full sequence is MTTETRFLYSQLPAIDRLLRDSSFLSLRDTYGHTRVVELLRQMLDEAREVIRGSQTLPAWCENWAQEVDARLTKEAQSALRPVINLTGTVLHTNLGRALQAEAAVEAVAQAMRSPVTLEYDLDDAGRGHRDRALAQLLCRITGAEDACIVNNNAAAVLLMLAATASGKEVVVSRGELVEIGGAFRIPDVMRQAGCTLHEVGTTNRTHANDYRQAVNENTALLMKVHTSNYSIQGFTKAIDEAELVALGKELDVPVVTDLGSGSLVDLSQYGLPKEPMPQELIAAGVSLVSFSGDKLLGGPQAGIIVGKKEMIARLQSHPLKRALRADKMTLAALEATLRLYLHPEALSEKLPTLRLLTRSAEVIQIQAQRLQAPLAAHYGAEFAVQVMPCLSQIGSGSLPVDRLPSAALTFTPHDGRGSHLESLAARWRELPVPVIGRIYDGRLWLDLRCLEDEQRFLEMLLK.

N6-(pyridoxal phosphate)lysine is present on Lys-295.

This sequence belongs to the SelA family. As to quaternary structure, homodecamer; pentamer of dimers. Binds only one seryl-tRNA(Sec) per dimer. Pyridoxal 5'-phosphate serves as cofactor.

It localises to the cytoplasm. It carries out the reaction L-seryl-tRNA(Sec) + selenophosphate + H(+) = L-selenocysteinyl-tRNA(Sec) + phosphate. Its pathway is aminoacyl-tRNA biosynthesis; selenocysteinyl-tRNA(Sec) biosynthesis; selenocysteinyl-tRNA(Sec) from L-seryl-tRNA(Sec) (bacterial route): step 1/1. Its function is as follows. Converts seryl-tRNA(Sec) to selenocysteinyl-tRNA(Sec) required for selenoprotein biosynthesis. This Escherichia coli (strain K12 / MC4100 / BW2952) protein is L-seryl-tRNA(Sec) selenium transferase.